The following is a 329-amino-acid chain: Ribosomal RNA small subunit methyltransferase C (329 aa).

It belongs to the methyltransferase superfamily. RsmC family. As to quaternary structure, monomer.

The protein localises to the cytoplasm. It catalyses the reaction guanosine(1207) in 16S rRNA + S-adenosyl-L-methionine = N(2)-methylguanosine(1207) in 16S rRNA + S-adenosyl-L-homocysteine + H(+). Functionally, specifically methylates the guanine in position 1207 of 16S rRNA in the 30S particle. This is Ribosomal RNA small subunit methyltransferase C from Actinobacillus pleuropneumoniae serotype 7 (strain AP76).